A 483-amino-acid chain; its full sequence is Probable gamma-aminobutyrate transaminase 4 (483 aa).

Residue 138–139 (GS) coordinates pyridoxal 5'-phosphate. Y171 serves as a coordination point for substrate. D278 contacts pyridoxal 5'-phosphate. K307 is a binding site for substrate. The residue at position 307 (K307) is an N6-(pyridoxal phosphate)lysine.

This sequence belongs to the class-III pyridoxal-phosphate-dependent aminotransferase family. Not detected in roots, stems, flowers or leaves of healthy plants.

It is found in the cytoplasm. It carries out the reaction 4-aminobutanoate + pyruvate = succinate semialdehyde + L-alanine. The enzyme catalyses 4-aminobutanoate + glyoxylate = succinate semialdehyde + glycine. Functionally, transaminase that degrades gamma-amino butyric acid (GABA). The polypeptide is Probable gamma-aminobutyrate transaminase 4 (GABA-T) (Oryza sativa subsp. japonica (Rice)).